We begin with the raw amino-acid sequence, 254 residues long: Small ribosomal subunit protein uS2 (254 aa).

Residues 228 to 248 are compositionally biased toward basic and acidic residues; sequence RKERKGQDAEEELKKASEPKA. The segment at 228–254 is disordered; it reads RKERKGQDAEEELKKASEPKAAEAAAE.

Belongs to the universal ribosomal protein uS2 family.

This is Small ribosomal subunit protein uS2 from Nitratidesulfovibrio vulgaris (strain ATCC 29579 / DSM 644 / CCUG 34227 / NCIMB 8303 / VKM B-1760 / Hildenborough) (Desulfovibrio vulgaris).